The sequence spans 660 residues: MEHYPFKLHSEFEPQGDQPEAIQKIVNGVNEGKRHQTLLGATGTGKTFTMSNVIKQVGKPTLIIAHNKTLAGQLYSEFKEFFPENRVEYFVSYYDYYQPEAYVPSTDTFIEKDASINDEIDQLRHSATSALFERDDVIVIASVSCIYGLGNPEEYRDLVVSIRAGMEMDRSELLKKLVDVQYTRNDIDFRRGTFRVRGDVVEIFPASREEMCIRVEFFGDEIDRIREVNYLTGEVLRERDHFAIFPASHFVTREEKMKSAIQRIENELEERLAELNAENKLLEAQRLEQRTNYDLEMMREMGFCSGIENYSVHLTLRPMGSTPYTLLDYFGDDWLVMIDESHVTLPQIRGMYNGDRARKQVLVDHGFRLPSALDNRPLKFEEFEEKTKQLVYVSATPGPFELEHTDEMVQQIIRPTGLLDPKIEVRPTENQIDDLLGEIQDRIDRNERVLVTTLTKKMSEDLTIYLKEAGIKVNYLHSEIKTLERIEIIRDLRMGTYDVIVGINLLREGIDIPEVSLVVILDADKEGFLRSQRSLVQTIGRAARNSRGEVIMYGDKITDSMRYALDETERRRTIQEAYNEKHNITPTTINKKIHDVISATVENDETNEQQQTEVPKKMTKKEREKTIANIEKEMKQAAKDLDFEKATELRDMLFELKAEG.

Residues 27 to 414 enclose the Helicase ATP-binding domain; that stretch reads NGVNEGKRHQ…TDEMVQQIIR (388 aa). 40 to 47 lines the ATP pocket; that stretch reads GATGTGKT. The short motif at 93 to 116 is the Beta-hairpin element; it reads YYDYYQPEAYVPSTDTFIEKDASI. The region spanning 431-593 is the Helicase C-terminal domain; the sequence is QIDDLLGEIQ…ITPTTINKKI (163 aa). The interval 603 to 622 is disordered; that stretch reads NDETNEQQQTEVPKKMTKKE. The UVR domain maps to 624–659; it reads EKTIANIEKEMKQAAKDLDFEKATELRDMLFELKAE.

It belongs to the UvrB family. Forms a heterotetramer with UvrA during the search for lesions. Interacts with UvrC in an incision complex.

The protein resides in the cytoplasm. In terms of biological role, the UvrABC repair system catalyzes the recognition and processing of DNA lesions. A damage recognition complex composed of 2 UvrA and 2 UvrB subunits scans DNA for abnormalities. Upon binding of the UvrA(2)B(2) complex to a putative damaged site, the DNA wraps around one UvrB monomer. DNA wrap is dependent on ATP binding by UvrB and probably causes local melting of the DNA helix, facilitating insertion of UvrB beta-hairpin between the DNA strands. Then UvrB probes one DNA strand for the presence of a lesion. If a lesion is found the UvrA subunits dissociate and the UvrB-DNA preincision complex is formed. This complex is subsequently bound by UvrC and the second UvrB is released. If no lesion is found, the DNA wraps around the other UvrB subunit that will check the other stand for damage. The chain is UvrABC system protein B from Staphylococcus saprophyticus subsp. saprophyticus (strain ATCC 15305 / DSM 20229 / NCIMB 8711 / NCTC 7292 / S-41).